Reading from the N-terminus, the 131-residue chain is Protein FAM107B (131 aa).

The residue at position 2 (A2) is an N-acetylalanine. 2 disordered regions span residues 39 to 78 (MNQK…KKKS) and 100 to 131 (KLQE…AQES). Position 50 is an N6-acetyllysine (K50). Positions 52-78 (ELQKVMEKRRRDQVIKQKEEEAQKKKS) are enriched in basic and acidic residues. Positions 61-112 (RRDQVIKQKEEEAQKKKSDLEIELLKRQQKLEQLELEKQKLQEEQENAPEFV) form a coiled coil.

It belongs to the FAM107 family.

This Rattus norvegicus (Rat) protein is Protein FAM107B.